The chain runs to 282 residues: Bifunctional protein FolD (282 aa).

Residues 165 to 167 (GRS), serine 190, and threonine 231 each bind NADP(+).

Belongs to the tetrahydrofolate dehydrogenase/cyclohydrolase family. In terms of assembly, homodimer.

The catalysed reaction is (6R)-5,10-methylene-5,6,7,8-tetrahydrofolate + NADP(+) = (6R)-5,10-methenyltetrahydrofolate + NADPH. It catalyses the reaction (6R)-5,10-methenyltetrahydrofolate + H2O = (6R)-10-formyltetrahydrofolate + H(+). It functions in the pathway one-carbon metabolism; tetrahydrofolate interconversion. Functionally, catalyzes the oxidation of 5,10-methylenetetrahydrofolate to 5,10-methenyltetrahydrofolate and then the hydrolysis of 5,10-methenyltetrahydrofolate to 10-formyltetrahydrofolate. The polypeptide is Bifunctional protein FolD (Clostridium botulinum (strain Eklund 17B / Type B)).